Here is a 210-residue protein sequence, read N- to C-terminus: Somatotropin-2 (210 aa).

A signal peptide spans methionine 1 to alanine 22. Histidine 38 is a Zn(2+) binding site. Cysteine 71 and cysteine 183 are oxidised to a cystine. Residue glutamate 192 participates in Zn(2+) binding. Cysteine 200 and cysteine 208 are disulfide-bonded.

The protein belongs to the somatotropin/prolactin family.

The protein localises to the secreted. In terms of biological role, growth hormone plays an important role in growth control and is involved in the regulation of several anabolic processes. Implicated as an osmoregulatory substance important for seawater adaptation. The chain is Somatotropin-2 (gh2) from Oncorhynchus nerka (Sockeye salmon).